A 98-amino-acid chain; its full sequence is NADH-ubiquinone oxidoreductase chain 4L (98 aa).

The next 3 membrane-spanning stretches (helical) occupy residues 1–21, 31–51, and 61–81; these read MSLT…GLLM, LCLE…VLTI, and IILL…LVVV.

The protein belongs to the complex I subunit 4L family. Core subunit of respiratory chain NADH dehydrogenase (Complex I) which is composed of 45 different subunits.

The protein resides in the mitochondrion inner membrane. The catalysed reaction is a ubiquinone + NADH + 5 H(+)(in) = a ubiquinol + NAD(+) + 4 H(+)(out). Core subunit of the mitochondrial membrane respiratory chain NADH dehydrogenase (Complex I) which catalyzes electron transfer from NADH through the respiratory chain, using ubiquinone as an electron acceptor. Part of the enzyme membrane arm which is embedded in the lipid bilayer and involved in proton translocation. This Chalinolobus tuberculatus (New Zealand long-tailed bat) protein is NADH-ubiquinone oxidoreductase chain 4L (MT-ND4L).